The chain runs to 443 residues: Chromosome partition protein MukF (443 aa).

The interval 209 to 237 (LDETSGNLRELQDTLNAAGDKLQAQLLRI) is leucine-zipper.

It belongs to the MukF family. As to quaternary structure, interacts, and probably forms a ternary complex, with MukE and MukB via its C-terminal region. The complex formation is stimulated by calcium or magnesium. It is required for an interaction between MukE and MukB.

The protein resides in the cytoplasm. The protein localises to the nucleoid. Functionally, involved in chromosome condensation, segregation and cell cycle progression. May participate in facilitating chromosome segregation by condensation DNA from both sides of a centrally located replisome during cell division. Not required for mini-F plasmid partitioning. Probably acts via its interaction with MukB and MukE. Overexpression results in anucleate cells. It has a calcium binding activity. The polypeptide is Chromosome partition protein MukF (Actinobacillus pleuropneumoniae serotype 5b (strain L20)).